The primary structure comprises 241 residues: Lysoplasmalogenase TMEM86A (241 aa).

Over 1-13 (MVSPVTVVKSEGP) the chain is Cytoplasmic. Residues 14–30 (KLVPFFKATCVYFVLWL) form a helical membrane-spanning segment. Residues 31–36 (PSSSPS) lie on the Extracellular side of the membrane. The helical transmembrane segment at 37–59 (WVSALIKCLPIFCLWLFLLAHGV) threads the bilayer. Residues 60 to 67 (RFLLAHPS) are Cytoplasmic-facing. A helical transmembrane segment spans residues 68–87 (ASLIFVGLVFSAVGDAFLIW). Residues 88 to 96 (QDHGYFEHG) lie on the Extracellular side of the membrane. The helical transmembrane segment at 97-113 (LLMFAVAHILYAAAFGM) threads the bilayer. At 114–119 (RPLALR) the chain is on the cytoplasmic side. A helical membrane pass occupies residues 120–136 (TGLVIGVLSGLCYALLY). Residues 137–142 (PGLSGA) are Extracellular-facing. A helical transmembrane segment spans residues 143–159 (FTYLVGVYVALISFMGW). The Cytoplasmic portion of the chain corresponds to 160–176 (RAMAGLRLVGAAWRWTE). The chain crosses the membrane as a helical span at residues 177-195 (LAAGGGALLFILSDLTIAL). The Extracellular portion of the chain corresponds to 196–206 (NKFCFPVPYSR). The helical transmembrane segment at 207–225 (ALIMSTYYAAQMLIALSAV) threads the bilayer. The Cytoplasmic segment spans residues 226 to 241 (ESREPVGEDYRLSKAD).

The protein belongs to the TMEM86 family. Highly expressed in the jejunum, white adipose tissue, kidney and macrophages.

It is found in the endoplasmic reticulum membrane. It carries out the reaction a 1-O-(1Z-alkenyl)-sn-glycero-3-phosphocholine + H2O = a 2,3-saturated aldehyde + sn-glycerol 3-phosphocholine. The enzyme catalyses a 1-O-(1Z-alkenyl)-sn-glycero-3-phosphoethanolamine + H2O = a 2,3-saturated aldehyde + sn-glycero-3-phosphoethanolamine. In terms of biological role, catalyzes the hydrolysis of the vinyl ether bond of choline or ethanolamine lysoplasmalogens, forming fatty aldehyde and glycerophosphocholine or glycerophosphoethanolamine, respectively and is specific for the sn-2-deacylated (lyso) form of plasmalogen. Plays an important role in lysoplasmalogen metabolism in the adipocyte tissue and macrophages. The chain is Lysoplasmalogenase TMEM86A (Tmem86a) from Mus musculus (Mouse).